The following is a 412-amino-acid chain: tRNA N6-adenosine threonylcarbamoyltransferase, mitochondrial (412 aa).

Residues methionine 1–isoleucine 78 constitute a mitochondrion transit peptide. Residues histidine 157 and histidine 161 each contribute to the a divalent metal cation site. Residues leucine 179–glycine 183, aspartate 212, alanine 228, glutamate 232, arginine 328–asparagine 329, and serine 363 contribute to the substrate site. Position 364 (aspartate 364) interacts with a divalent metal cation.

It belongs to the KAE1 / TsaD family. Homodimer. The cofactor is a divalent metal cation.

It localises to the mitochondrion. It catalyses the reaction L-threonylcarbamoyladenylate + adenosine(37) in tRNA = N(6)-L-threonylcarbamoyladenosine(37) in tRNA + AMP + H(+). Required for the formation of a threonylcarbamoyl group on adenosine at position 37 (t(6)A37) in mitochondrial tRNAs that read codons beginning with adenine. Probably involved in the transfer of the threonylcarbamoyl moiety of threonylcarbamoyl-AMP (TC-AMP) to the N6 group of A37. Involved in mitochondrial genome maintenance. This is tRNA N6-adenosine threonylcarbamoyltransferase, mitochondrial (pgp1) from Schizosaccharomyces pombe (strain 972 / ATCC 24843) (Fission yeast).